The sequence spans 456 residues: tRNA modification GTPase MnmE (456 aa).

(6S)-5-formyl-5,6,7,8-tetrahydrofolate contacts are provided by arginine 24, glutamate 81, and lysine 120. A TrmE-type G domain is found at 216 to 379 (GMTVVIAGRP…LREHLKACMG (164 aa)). Residue asparagine 226 coordinates K(+). GTP-binding positions include 226–231 (NAGKSS), 245–251 (TEIAGTT), 270–273 (DTAG), 335–338 (NKAD), and 359–361 (SAR). Serine 230 serves as a coordination point for Mg(2+). K(+)-binding residues include threonine 245, isoleucine 247, and threonine 250. Threonine 251 is a Mg(2+) binding site. Lysine 456 provides a ligand contact to (6S)-5-formyl-5,6,7,8-tetrahydrofolate.

It belongs to the TRAFAC class TrmE-Era-EngA-EngB-Septin-like GTPase superfamily. TrmE GTPase family. Homodimer. Heterotetramer of two MnmE and two MnmG subunits. The cofactor is K(+).

The protein resides in the cytoplasm. Exhibits a very high intrinsic GTPase hydrolysis rate. Involved in the addition of a carboxymethylaminomethyl (cmnm) group at the wobble position (U34) of certain tRNAs, forming tRNA-cmnm(5)s(2)U34. The protein is tRNA modification GTPase MnmE of Pseudomonas savastanoi pv. phaseolicola (strain 1448A / Race 6) (Pseudomonas syringae pv. phaseolicola (strain 1448A / Race 6)).